A 311-amino-acid chain; its full sequence is MPLRIIFMGTPEFSVPTLAALVEAGHEIAAVYTQPPRPGGRRGLDLQKSPVHQAAELLGVPVLTPVNFKDAADRQAFRDFNADVAVVVAYGLLLPEEILSGTRYGCYNGHASLLPRWRGAAPIQRAIMAGDRETGMMVMKMDKGLDTGPVALTKTVPIGETMTAGELHDKLMHAGAALMKEAMVKLELGELPLTPQPQEGVLYAAKISKDETRIDFTKPAADVHNHIRGLAPFPGAWFELETAGRTERIKVLGSEPAAGAGAPGTILDDALTIACGDGAVRPTRLQRAGGKPLATPDFLRGSPIAAGTRIC.

112–115 (SLLP) is a (6S)-5,6,7,8-tetrahydrofolate binding site.

It belongs to the Fmt family.

It carries out the reaction L-methionyl-tRNA(fMet) + (6R)-10-formyltetrahydrofolate = N-formyl-L-methionyl-tRNA(fMet) + (6S)-5,6,7,8-tetrahydrofolate + H(+). In terms of biological role, attaches a formyl group to the free amino group of methionyl-tRNA(fMet). The formyl group appears to play a dual role in the initiator identity of N-formylmethionyl-tRNA by promoting its recognition by IF2 and preventing the misappropriation of this tRNA by the elongation apparatus. The polypeptide is Methionyl-tRNA formyltransferase (Sinorhizobium fredii (strain NBRC 101917 / NGR234)).